The sequence spans 250 residues: Carboxymethylproline synthase (250 aa).

60–64 (AGGDF) is a malonyl-CoA binding site.

This sequence belongs to the enoyl-CoA hydratase/isomerase family. As to quaternary structure, homotrimer.

It catalyses the reaction (S)-1-pyrroline-5-carboxylate + malonyl-CoA + H2O + H(+) = (2S,5S)-5-carboxymethylproline + CO2 + CoA. It functions in the pathway antibiotic biosynthesis; carbapenem biosynthesis. Catalyzes the formation of (2S,5S)-carboxymethylproline (t-CMP) from malonyl-CoA and (S)-1-pyrroline-5-carboxylate, the first step in the biosynthesis of (5R)-carbapen-2-em-3-carboxylate, a beta-lactam antibiotic of the carbapenem class. Also catalyzes the independent decarboxylation of malonyl-CoA and methylmalonyl-CoA and the hydrolysis of CoA esters such as acetyl-CoA and propionyl-CoA. Catalyzes the reaction with a C2 epimeric mixture of methylmalonyl-CoA to give a 55:45 mixture of (6R)- and (6S)-epimers of 6-methyl-t-CMP, under standard incubation conditions. The sequence is that of Carboxymethylproline synthase from Pectobacterium carotovorum subsp. carotovorum (Erwinia carotovora subsp. carotovora).